We begin with the raw amino-acid sequence, 213 residues long: Kynurenine formamidase (213 aa).

A substrate-binding site is contributed by Trp18. Residues His48, His52, and Asp54 each coordinate Zn(2+). The active-site Proton donor/acceptor is His58. The Zn(2+) site is built by His160 and Glu172.

It belongs to the Cyclase 1 superfamily. KynB family. Homodimer. It depends on Zn(2+) as a cofactor.

It catalyses the reaction N-formyl-L-kynurenine + H2O = L-kynurenine + formate + H(+). It functions in the pathway amino-acid degradation; L-tryptophan degradation via kynurenine pathway; L-kynurenine from L-tryptophan: step 2/2. Catalyzes the hydrolysis of N-formyl-L-kynurenine to L-kynurenine, the second step in the kynurenine pathway of tryptophan degradation. This Burkholderia pseudomallei (strain 1710b) protein is Kynurenine formamidase.